Reading from the N-terminus, the 337-residue chain is 1-aminocyclopropane-1-carboxylate deaminase (337 aa).

An N6-(pyridoxal phosphate)lysine modification is found at Lys50.

This sequence belongs to the ACC deaminase/D-cysteine desulfhydrase family. In terms of assembly, homotrimer. It depends on pyridoxal 5'-phosphate as a cofactor.

It carries out the reaction 1-aminocyclopropane-1-carboxylate + H2O = 2-oxobutanoate + NH4(+). Catalyzes a cyclopropane ring-opening reaction, the irreversible conversion of 1-aminocyclopropane-1-carboxylate (ACC) to ammonia and alpha-ketobutyrate. Allows growth on ACC as a nitrogen source. In Mesorhizobium japonicum (strain LMG 29417 / CECT 9101 / MAFF 303099) (Mesorhizobium loti (strain MAFF 303099)), this protein is 1-aminocyclopropane-1-carboxylate deaminase.